Here is a 240-residue protein sequence, read N- to C-terminus: Uridylate kinase (240 aa).

12-15 (KLSG) is an ATP binding site. The involved in allosteric activation by GTP stretch occupies residues 20-25 (GEDGFG). Residue Gly54 participates in UMP binding. Residues Gly55 and Arg59 each contribute to the ATP site. UMP-binding positions include Asp74 and 135–142 (TGNPYFST). Asn163, Tyr169, and Asp172 together coordinate ATP.

This sequence belongs to the UMP kinase family. In terms of assembly, homohexamer.

The protein resides in the cytoplasm. It catalyses the reaction UMP + ATP = UDP + ADP. The protein operates within pyrimidine metabolism; CTP biosynthesis via de novo pathway; UDP from UMP (UMPK route): step 1/1. Allosterically activated by GTP. Probably inhibited by UTP. In terms of biological role, catalyzes the reversible phosphorylation of UMP to UDP. The protein is Uridylate kinase (pyrH) of Enterococcus faecalis (strain ATCC 700802 / V583).